Consider the following 1829-residue polypeptide: Iron-regulated protein FrpC (1829 aa).

Hemolysin-type calcium-binding repeat units lie at residues F869–L886, I887–Y904, N1015–L1032, N1033–L1050, D1051–L1068, N1069–L1086, I1087–Y1104, N1215–L1232, N1233–L1250, D1251–L1268, N1269–L1286, I1287–Y1304, N1415–L1432, N1433–L1450, N1451–L1468, N1469–L1486, I1487–Y1504, N1615–L1632, N1633–L1650, D1651–L1668, N1669–L1686, and I1687–Y1704. Positions G1671 to A1690 are disordered.

This sequence belongs to the RTX prokaryotic toxin (TC 1.C.11) family.

Its subcellular location is the cell outer membrane. The protein localises to the secreted. Its function is as follows. May participate in the pathogenesis of meningococcal disease. The polypeptide is Iron-regulated protein FrpC (frpC) (Neisseria meningitidis serogroup B (strain ATCC BAA-335 / MC58)).